Here is a 985-residue protein sequence, read N- to C-terminus: Vacuolar membrane protease (985 aa).

At 1 to 20 (MASSRAQRFNPIAFTPWPVT) the chain is on the cytoplasmic side. The helical transmembrane segment at 21 to 41 (CITTIVYLALLIPILVINLVV) threads the bilayer. At 42 to 388 (PSAPETNPKG…MFGTAFAVFR (347 aa)) the chain is on the vacuolar side. 3 N-linked (GlcNAc...) asparagine glycosylation sites follow: Asn53, Asn116, and Asn119. 2 residues coordinate Zn(2+): His175 and Asp187. The Proton acceptor role is filled by Glu221. Glu222 is a Zn(2+) binding site. N-linked (GlcNAc...) asparagine glycosylation is present at Asn238. Glu247 and His320 together coordinate Zn(2+). A helical membrane pass occupies residues 389 to 409 (LHTLFAISVALLVIAPLVIFV). The Cytoplasmic portion of the chain corresponds to 410–440 (TNRMYLFSMSKSLEGTGDQVSLRGLRGFSRT). Residues 441 to 461 (PIILVTATTIPICLAYLLEKV) traverse the membrane as a helical segment. Topologically, residues 462–470 (NPYIVHSSQ) are vacuolar. A helical transmembrane segment spans residues 471–491 (FSVWSMMFSAWIFLAWFLACA). Residues 492–502 (ADFFRPSALHR) lie on the Cytoplasmic side of the membrane. Residues 503-523 (AYSYTWIFIATWIMLVINTVY) traverse the membrane as a helical segment. Over 524–527 (ANQK) the chain is Vacuolar. Residues 528–548 (GIAAGYFLLFYFAGAFLATWI) form a helical membrane-spanning segment. Residues 549-666 (SYLELFALPR…TLPRWTWVLQ (118 aa)) are Cytoplasmic-facing. The disordered stretch occupies residues 563 to 612 (ARQTTGRRPSSLSSRLLTSSADELRSNASPSTAEFPGAAGEDTDPTESTS). Residues 566–582 (TTGRRPSSLSSRLLTSS) show a composition bias toward low complexity. A helical membrane pass occupies residues 667 to 687 (LLLLAPIVLILVGQLALFLTA). Topologically, residues 688–700 (SMCQVGSDGVSTF) are vacuolar. A helical transmembrane segment spans residues 701-721 (VVYLACAVFTTLLCIPLFPLI). Topologically, residues 722–727 (HRFTYH) are cytoplasmic. A helical membrane pass occupies residues 728–748 (IPTFLFLVFIGTLIYNLVAFP). Over 749-985 (FSPANRLKTF…VEASHSFTIQ (237 aa)) the chain is Vacuolar. Asn767, Asn795, and Asn839 each carry an N-linked (GlcNAc...) asparagine glycan.

The protein belongs to the peptidase M28 family. It depends on Zn(2+) as a cofactor.

The protein resides in the vacuole membrane. In terms of biological role, may be involved in vacuolar sorting and osmoregulation. The polypeptide is Vacuolar membrane protease (Ajellomyces capsulatus (strain G186AR / H82 / ATCC MYA-2454 / RMSCC 2432) (Darling's disease fungus)).